The sequence spans 360 residues: Phospho-N-acetylmuramoyl-pentapeptide-transferase (360 aa).

10 consecutive transmembrane segments (helical) span residues 27–47, 71–91, 93–113, 128–148, 168–188, 199–219, 239–259, 262–282, 288–308, and 337–357; these read GAMI…INSL, TPTM…LLWA, LASV…AIGF, FSGK…AFTI, LVIN…VGAG, GLAI…AYLS, LAVV…FNAP, AIFM…TVAV, IVLA…IIQV, and QVVI…LSTL.

The protein belongs to the glycosyltransferase 4 family. MraY subfamily. It depends on Mg(2+) as a cofactor.

It localises to the cell inner membrane. It carries out the reaction UDP-N-acetyl-alpha-D-muramoyl-L-alanyl-gamma-D-glutamyl-meso-2,6-diaminopimeloyl-D-alanyl-D-alanine + di-trans,octa-cis-undecaprenyl phosphate = di-trans,octa-cis-undecaprenyl diphospho-N-acetyl-alpha-D-muramoyl-L-alanyl-D-glutamyl-meso-2,6-diaminopimeloyl-D-alanyl-D-alanine + UMP. It functions in the pathway cell wall biogenesis; peptidoglycan biosynthesis. Catalyzes the initial step of the lipid cycle reactions in the biosynthesis of the cell wall peptidoglycan: transfers peptidoglycan precursor phospho-MurNAc-pentapeptide from UDP-MurNAc-pentapeptide onto the lipid carrier undecaprenyl phosphate, yielding undecaprenyl-pyrophosphoryl-MurNAc-pentapeptide, known as lipid I. This is Phospho-N-acetylmuramoyl-pentapeptide-transferase from Brucella ovis (strain ATCC 25840 / 63/290 / NCTC 10512).